Here is a 550-residue protein sequence, read N- to C-terminus: Hydroxylamine reductase (550 aa).

Residues cysteine 3, cysteine 6, cysteine 18, and cysteine 25 each coordinate [2Fe-2S] cluster. Hybrid [4Fe-2O-2S] cluster is bound by residues histidine 249, glutamate 273, cysteine 317, cysteine 405, cysteine 433, cysteine 458, glutamate 492, and lysine 494. Cysteine 405 carries the post-translational modification Cysteine persulfide.

This sequence belongs to the HCP family. [2Fe-2S] cluster is required as a cofactor. The cofactor is hybrid [4Fe-2O-2S] cluster.

It is found in the cytoplasm. The catalysed reaction is A + NH4(+) + H2O = hydroxylamine + AH2 + H(+). Catalyzes the reduction of hydroxylamine to form NH(3) and H(2)O. This is Hydroxylamine reductase from Escherichia coli O6:H1 (strain CFT073 / ATCC 700928 / UPEC).